A 202-amino-acid chain; its full sequence is Orotate phosphoribosyltransferase (202 aa).

A 5-phospho-alpha-D-ribose 1-diphosphate-binding site is contributed by 113 to 121; the sequence is EDIITTGGS. Orotate-binding residues include Thr117 and Arg145.

Belongs to the purine/pyrimidine phosphoribosyltransferase family. PyrE subfamily. In terms of assembly, homodimer. Requires Mg(2+) as cofactor.

It catalyses the reaction orotidine 5'-phosphate + diphosphate = orotate + 5-phospho-alpha-D-ribose 1-diphosphate. It functions in the pathway pyrimidine metabolism; UMP biosynthesis via de novo pathway; UMP from orotate: step 1/2. Functionally, catalyzes the transfer of a ribosyl phosphate group from 5-phosphoribose 1-diphosphate to orotate, leading to the formation of orotidine monophosphate (OMP). This is Orotate phosphoribosyltransferase from Campylobacter lari (strain RM2100 / D67 / ATCC BAA-1060).